Consider the following 693-residue polypeptide: Translation factor GUF1 homolog, chloroplastic (693 aa).

A chloroplast-targeting transit peptide spans 1-51 (MATDLSSSSTLLLSRNCKTPPFYHTTNSLSLSKTHHLYASRNAVVSRLRLL). In terms of domain architecture, tr-type G spans 86–267 (SNIRNFCIIA…AIVERIPSPR (182 aa)). Residues 95–102 (AHIDHGKS), 160–164 (DTPGH), and 214–217 (NKID) contribute to the GTP site.

This sequence belongs to the TRAFAC class translation factor GTPase superfamily. Classic translation factor GTPase family. LepA subfamily.

It is found in the plastid. The protein localises to the chloroplast. It catalyses the reaction GTP + H2O = GDP + phosphate + H(+). Functionally, promotes chloroplast protein synthesis. May act as a fidelity factor of the translation reaction, by catalyzing a one-codon backward translocation of tRNAs on improperly translocated ribosomes. In Ricinus communis (Castor bean), this protein is Translation factor GUF1 homolog, chloroplastic.